Here is a 243-residue protein sequence, read N- to C-terminus: Fibroblast growth factor 12 (243 aa).

Disordered stretches follow at residues 1–39 (MAAA…DGRS) and 216–243 (IGEK…QDST). The short motif at 11–38 (RQKRQARESNSDRVSASKRRSSPSKDGR) is the Bipartite nuclear localization signal element.

The protein belongs to the heparin-binding growth factors family. Interacts with the C-terminal region of SCN9A. Brain, eye and testis; highly expressed in embryonic retina, olfactory epithelium, olfactory bulb, and in a segmental pattern of the body wall; in adult olfactory bulb, less in cerebellum, deep cerebellar nuclei, cortex and multiple midbrain structures.

The protein resides in the nucleus. Its function is as follows. Involved in nervous system development and function. Involved in the positive regulation of voltage-gated sodium channel activity. Promotes neuronal excitability by elevating the voltage dependence of neuronal sodium channel SCN8A fast inactivation. This Homo sapiens (Human) protein is Fibroblast growth factor 12 (FGF12).